Here is a 407-residue protein sequence, read N- to C-terminus: Biflaviolin synthase CYP158A1 (407 aa).

Residues 1-11 (MTQETTTLTGQ) show a composition bias toward polar residues. A disordered region spans residues 1 to 20 (MTQETTTLTGQSPPPVRDWP). Flaviolin is bound by residues R92, Y199, and 290 to 291 (HR). A heme-binding site is contributed by C356.

This sequence belongs to the cytochrome P450 family. It depends on heme as a cofactor.

The enzyme catalyses 2 flaviolin + 2 reduced [2Fe-2S]-[ferredoxin] + O2 + H(+) = 3,3'-biflaviolin + 2 oxidized [2Fe-2S]-[ferredoxin] + 2 H2O. The catalysed reaction is 2 flaviolin + 2 reduced [2Fe-2S]-[ferredoxin] + O2 + H(+) = 3,8'-biflaviolin + 2 oxidized [2Fe-2S]-[ferredoxin] + 2 H2O. The protein operates within pigment biosynthesis. Functionally, catalyzes oxidative C-C coupling reaction to polymerize flaviolin and form highly conjugated pigments which protect the soil bacterium from deleterious effects of UV irradiation (two isomers of biflaviolin and one triflaviolin). This chain is Biflaviolin synthase CYP158A1, found in Streptomyces coelicolor (strain ATCC BAA-471 / A3(2) / M145).